The chain runs to 598 residues: Elongation factor 4 (598 aa).

In terms of domain architecture, tr-type G spans Lys2–Glu184. GTP contacts are provided by residues Asp14–Thr19 and Asn131–Asp134.

It belongs to the TRAFAC class translation factor GTPase superfamily. Classic translation factor GTPase family. LepA subfamily.

It is found in the cell inner membrane. The enzyme catalyses GTP + H2O = GDP + phosphate + H(+). Its function is as follows. Required for accurate and efficient protein synthesis under certain stress conditions. May act as a fidelity factor of the translation reaction, by catalyzing a one-codon backward translocation of tRNAs on improperly translocated ribosomes. Back-translocation proceeds from a post-translocation (POST) complex to a pre-translocation (PRE) complex, thus giving elongation factor G a second chance to translocate the tRNAs correctly. Binds to ribosomes in a GTP-dependent manner. The polypeptide is Elongation factor 4 (Histophilus somni (strain 2336) (Haemophilus somnus)).